Here is a 239-residue protein sequence, read N- to C-terminus: MATPHINAEMGDFADVVLMPGDPLRAKHIAETSLEDVREVNNVRGMLGFTGTYKGRKISVMGHGMGIPSCSIYTKELITDFGVKKIIRVGSCGAVRMDVKLSDVVIGMGACTDSKVNRIRFKDHDFAAIADFDMVRNAVDAAKALGVDARVGNLFSADLFYSPDGEMFDVMEKYGVLGVEMEAAGIYGVAAEFGAKALTICTVSDHIRTHEQTTAAERQTTFNDMIKIALESVLLGDQE.

H5 contributes to the a purine D-ribonucleoside binding site. Phosphate is bound by residues G21, R25, R44, and 88–91 (RVGS). A purine D-ribonucleoside-binding positions include 180 to 182 (EME) and 204 to 205 (SD). D205 acts as the Proton donor in catalysis.

Belongs to the PNP/UDP phosphorylase family. Homohexamer; trimer of homodimers.

The catalysed reaction is a purine D-ribonucleoside + phosphate = a purine nucleobase + alpha-D-ribose 1-phosphate. It catalyses the reaction a purine 2'-deoxy-D-ribonucleoside + phosphate = a purine nucleobase + 2-deoxy-alpha-D-ribose 1-phosphate. Functionally, catalyzes the reversible phosphorolytic breakdown of the N-glycosidic bond in the beta-(deoxy)ribonucleoside molecules, with the formation of the corresponding free purine bases and pentose-1-phosphate. The chain is Purine nucleoside phosphorylase DeoD-type from Salmonella gallinarum (strain 287/91 / NCTC 13346).